Consider the following 183-residue polypeptide: Streptavidin-V2 (183 aa).

Residues 1-24 (MRKIVVAAIAVSLTTVGITASASA) form the signal peptide. In terms of domain architecture, Avidin-like spans 37–159 (AEAGITGTWY…GHDTFTKVKP (123 aa)). Residues tyrosine 67 and tyrosine 78 each contribute to the biotin site. The Cell attachment site; atypical motif lies at 83 to 85 (RYD). Biotin contacts are provided by tryptophan 116, tryptophan 132, and tryptophan 144.

The protein belongs to the avidin/streptavidin family. Homotetramer.

The protein localises to the secreted. Its function is as follows. The biological function of streptavidin is not known. Forms a strong non-covalent specific complex with biotin (one molecule of biotin per subunit of streptavidin). The protein is Streptavidin-V2 of Streptomyces violaceus (Streptomyces venezuelae).